The chain runs to 172 residues: Putative phosphoesterase BT9727_1129 (172 aa).

The Proton donor role is filled by His-34. 2 short sequence motifs (HXTX) span residues 34-37 (HITL) and 115-118 (HLTI). His-115 serves as the catalytic Proton acceptor.

This sequence belongs to the 2H phosphoesterase superfamily. YjcG family.

In Bacillus thuringiensis subsp. konkukian (strain 97-27), this protein is Putative phosphoesterase BT9727_1129.